The chain runs to 271 residues: Putative carboxymethylenebutenolidase (271 aa).

Active-site residues include Cys-147, Asp-204, and His-236.

Belongs to the dienelactone hydrolase family.

It catalyses the reaction 2-(5-oxo-2,5-dihydrofuran-2-ylidene)acetate + H2O = 4-oxohex-2-enedioate + H(+). The chain is Putative carboxymethylenebutenolidase (ysgA) from Escherichia coli O157:H7.